The sequence spans 1365 residues: Polyprotein ABA-1 (1365 aa).

Belongs to the NPA family. In terms of processing, nematode polyprotein allergens (NPAs) are synthesized as large polypeptides that are subsequently proteolytically cleaved to active polypeptide units. In terms of tissue distribution, pseudocoelomic fluid.

In terms of biological role, has high binding affinity for fatty acids and retinoids. The sequence is that of Polyprotein ABA-1 (ABA-1) from Ascaris suum (Pig roundworm).